The following is a 155-amino-acid chain: SsrA-binding protein (155 aa).

This sequence belongs to the SmpB family.

Its subcellular location is the cytoplasm. Its function is as follows. Required for rescue of stalled ribosomes mediated by trans-translation. Binds to transfer-messenger RNA (tmRNA), required for stable association of tmRNA with ribosomes. tmRNA and SmpB together mimic tRNA shape, replacing the anticodon stem-loop with SmpB. tmRNA is encoded by the ssrA gene; the 2 termini fold to resemble tRNA(Ala) and it encodes a 'tag peptide', a short internal open reading frame. During trans-translation Ala-aminoacylated tmRNA acts like a tRNA, entering the A-site of stalled ribosomes, displacing the stalled mRNA. The ribosome then switches to translate the ORF on the tmRNA; the nascent peptide is terminated with the 'tag peptide' encoded by the tmRNA and targeted for degradation. The ribosome is freed to recommence translation, which seems to be the essential function of trans-translation. The protein is SsrA-binding protein of Streptococcus pneumoniae (strain P1031).